A 309-amino-acid chain; its full sequence is D-alanine--D-alanine ligase (309 aa).

Residues Lys-106–Glu-305 form the ATP-grasp domain. Residue Val-136–Thr-191 participates in ATP binding. 3 residues coordinate Mg(2+): Asp-259, Glu-272, and Asn-274.

This sequence belongs to the D-alanine--D-alanine ligase family. Mg(2+) serves as cofactor. Mn(2+) is required as a cofactor.

The protein resides in the cytoplasm. It carries out the reaction 2 D-alanine + ATP = D-alanyl-D-alanine + ADP + phosphate + H(+). Its pathway is cell wall biogenesis; peptidoglycan biosynthesis. Functionally, cell wall formation. In Pasteurella multocida (strain Pm70), this protein is D-alanine--D-alanine ligase.